The chain runs to 334 residues: Holliday junction branch migration complex subunit RuvB (334 aa).

The tract at residues 1 to 181 (MHDRLISGTE…FGIVQRLEFY (181 aa)) is large ATPase domain (RuvB-L). ATP-binding positions include isoleucine 20, arginine 21, glycine 62, lysine 65, threonine 66, threonine 67, 128-130 (EDY), arginine 171, tyrosine 181, and arginine 218. Mg(2+) is bound at residue threonine 66. Residues 182–252 (SVEDLTHIVT…MAQRALDMLN (71 aa)) are small ATPAse domain (RuvB-S). A head domain (RuvB-H) region spans residues 255-334 (KDGLDTLDRR…FGLTPPEPKN (80 aa)). Arginine 310 and arginine 315 together coordinate DNA.

Belongs to the RuvB family. Homohexamer. Forms an RuvA(8)-RuvB(12)-Holliday junction (HJ) complex. HJ DNA is sandwiched between 2 RuvA tetramers; dsDNA enters through RuvA and exits via RuvB. An RuvB hexamer assembles on each DNA strand where it exits the tetramer. Each RuvB hexamer is contacted by two RuvA subunits (via domain III) on 2 adjacent RuvB subunits; this complex drives branch migration. In the full resolvosome a probable DNA-RuvA(4)-RuvB(12)-RuvC(2) complex forms which resolves the HJ.

It localises to the cytoplasm. It catalyses the reaction ATP + H2O = ADP + phosphate + H(+). Functionally, the RuvA-RuvB-RuvC complex processes Holliday junction (HJ) DNA during genetic recombination and DNA repair, while the RuvA-RuvB complex plays an important role in the rescue of blocked DNA replication forks via replication fork reversal (RFR). RuvA specifically binds to HJ cruciform DNA, conferring on it an open structure. The RuvB hexamer acts as an ATP-dependent pump, pulling dsDNA into and through the RuvAB complex. RuvB forms 2 homohexamers on either side of HJ DNA bound by 1 or 2 RuvA tetramers; 4 subunits per hexamer contact DNA at a time. Coordinated motions by a converter formed by DNA-disengaged RuvB subunits stimulates ATP hydrolysis and nucleotide exchange. Immobilization of the converter enables RuvB to convert the ATP-contained energy into a lever motion, pulling 2 nucleotides of DNA out of the RuvA tetramer per ATP hydrolyzed, thus driving DNA branch migration. The RuvB motors rotate together with the DNA substrate, which together with the progressing nucleotide cycle form the mechanistic basis for DNA recombination by continuous HJ branch migration. Branch migration allows RuvC to scan DNA until it finds its consensus sequence, where it cleaves and resolves cruciform DNA. The chain is Holliday junction branch migration complex subunit RuvB from Acinetobacter baylyi (strain ATCC 33305 / BD413 / ADP1).